Consider the following 267-residue polypeptide: Ras-related protein Rab-36 (267 aa).

Residues V68, G69, K70, T71, S72, D83, Y86, and T89 each contribute to the GTP site. T71 provides a ligand contact to Mg(2+). Residues 76–94 (RLCKNVFDHDYKATIGVDF) carry the Switch 1 motif. Residues T89 and D112 each contribute to the Mg(2+) site. Positions 113–132 (TAGQEKFKCIASAYYRGAQV) match the Switch 2 motif. GTP is bound by residues G115, K172, D174, S203, A204, and K205. Residues C266 and C267 are each lipidated (S-geranylgeranyl cysteine).

Belongs to the small GTPase superfamily. Rab family. The cofactor is Mg(2+).

It localises to the golgi apparatus membrane. It carries out the reaction GTP + H2O = GDP + phosphate + H(+). Its activity is regulated as follows. Regulated by guanine nucleotide exchange factors (GEFs) which promote the exchange of bound GDP for free GTP. Regulated by GTPase activating proteins (GAPs) which increase the GTP hydrolysis activity. Inhibited by GDP dissociation inhibitors (GDIs). In terms of biological role, the small GTPases Rab are key regulators of intracellular membrane trafficking, from the formation of transport vesicles to their fusion with membranes. Rabs cycle between an inactive GDP-bound form and an active GTP-bound form that is able to recruit to membranes different sets of downstream effectors directly responsible for vesicle formation, movement, tethering and fusion. The protein is Ras-related protein Rab-36 of Mus musculus (Mouse).